A 194-amino-acid chain; its full sequence is ATP-dependent Clp protease proteolytic subunit 1 (194 aa).

The Nucleophile role is filled by serine 98. Residue histidine 123 is part of the active site.

This sequence belongs to the peptidase S14 family. In terms of assembly, fourteen ClpP subunits assemble into 2 heptameric rings which stack back to back to give a disk-like structure with a central cavity, resembling the structure of eukaryotic proteasomes.

The protein resides in the cytoplasm. It catalyses the reaction Hydrolysis of proteins to small peptides in the presence of ATP and magnesium. alpha-casein is the usual test substrate. In the absence of ATP, only oligopeptides shorter than five residues are hydrolyzed (such as succinyl-Leu-Tyr-|-NHMec, and Leu-Tyr-Leu-|-Tyr-Trp, in which cleavage of the -Tyr-|-Leu- and -Tyr-|-Trp bonds also occurs).. Functionally, cleaves peptides in various proteins in a process that requires ATP hydrolysis. Has a chymotrypsin-like activity. Plays a major role in the degradation of misfolded proteins. ClpXP1 is involved in the complete degradation of the Site-2 clipped anti-sigma-W factor RsiW. This results in the release of SigW and the transcription activation of the genes under the control of the sigma-W factor. The protein is ATP-dependent Clp protease proteolytic subunit 1 of Halalkalibacterium halodurans (strain ATCC BAA-125 / DSM 18197 / FERM 7344 / JCM 9153 / C-125) (Bacillus halodurans).